Here is a 376-residue protein sequence, read N- to C-terminus: Putative transmembrane protein 183BP (376 aa).

2 disordered regions span residues Met-1 to Lys-20 and Ala-102 to Gly-127. The chain crosses the membrane as a helical span at residues Leu-300 to Val-320.

Belongs to the TMEM183 family. As to expression, expressed in brain, lung, pancreas, thymus, intestine and blood. Not detected in heart, placenta, liver, muscle, kidney, spleen, prostate, testis, ovary and colon.

It localises to the membrane. This chain is Putative transmembrane protein 183BP, found in Homo sapiens (Human).